A 577-amino-acid chain; its full sequence is Calcium-dependent protein kinase 22 (577 aa).

Residue G2 is the site of N-myristoyl glycine attachment. Residues 105 to 368 form the Protein kinase domain; it reads YRLGAELGRG…AKEVLEHPWL (264 aa). ATP contacts are provided by residues 111 to 119 and K134; that span reads LGRGEFGVT. The active-site Proton acceptor is D234. The interval 374–404 is autoinhibitory domain; it reads APNVSLGEIVRSRLMQFSAMNKFKKKALGVV. EF-hand domains lie at 411 to 446, 447 to 482, 483 to 518, and 520 to 553; these read EEMD…NGHP, VPET…IKKM, SNEE…ELGP, and EQVV…GSDW. 19 residues coordinate Ca(2+): D424, D426, S428, N430, D435, D460, D462, N464, T466, E471, D496, D498, N500, E507, D531, D533, D535, R537, and E542.

This sequence belongs to the protein kinase superfamily. Ser/Thr protein kinase family. CDPK subfamily.

It is found in the membrane. It catalyses the reaction L-seryl-[protein] + ATP = O-phospho-L-seryl-[protein] + ADP + H(+). The enzyme catalyses L-threonyl-[protein] + ATP = O-phospho-L-threonyl-[protein] + ADP + H(+). With respect to regulation, activated by calcium. Autophosphorylation may play an important role in the regulation of the kinase activity. Its function is as follows. May play a role in signal transduction pathways that involve calcium as a second messenger. This Oryza sativa subsp. japonica (Rice) protein is Calcium-dependent protein kinase 22.